The following is a 434-amino-acid chain: dTDP-D-glucose 4,6-dehydratase (434 aa).

Position 134 (Thr134) interacts with substrate. Asp135 (proton donor) is an active-site residue. Catalysis depends on proton acceptor residues Glu136 and Tyr169. Low complexity predominate over residues 286-309 (NNNNNNNNNNNNNNNNNNNNNNNN). The interval 286-310 (NNNNNNNNNNNNNNNNNNNNNNNND) is disordered.

Belongs to the NAD(P)-dependent epimerase/dehydratase family. dTDP-glucose dehydratase subfamily. It depends on NAD(+) as a cofactor.

It carries out the reaction dTDP-alpha-D-glucose = dTDP-4-dehydro-6-deoxy-alpha-D-glucose + H2O. The polypeptide is dTDP-D-glucose 4,6-dehydratase (tgds) (Dictyostelium discoideum (Social amoeba)).